A 137-amino-acid polypeptide reads, in one-letter code: Small ribosomal subunit protein uS12 (137 aa).

Residues 1 to 25 (MPTINQLVRQGRKSKTYKSDSPALS) are disordered. A 3-methylthioaspartic acid modification is found at D102.

This sequence belongs to the universal ribosomal protein uS12 family. As to quaternary structure, part of the 30S ribosomal subunit. Contacts proteins S8 and S17. May interact with IF1 in the 30S initiation complex.

Its function is as follows. With S4 and S5 plays an important role in translational accuracy. Functionally, interacts with and stabilizes bases of the 16S rRNA that are involved in tRNA selection in the A site and with the mRNA backbone. Located at the interface of the 30S and 50S subunits, it traverses the body of the 30S subunit contacting proteins on the other side and probably holding the rRNA structure together. The combined cluster of proteins S8, S12 and S17 appears to hold together the shoulder and platform of the 30S subunit. This Finegoldia magna (strain ATCC 29328 / DSM 20472 / WAL 2508) (Peptostreptococcus magnus) protein is Small ribosomal subunit protein uS12.